A 104-amino-acid chain; its full sequence is Large ribosomal subunit protein uL24 (104 aa).

It belongs to the universal ribosomal protein uL24 family. Part of the 50S ribosomal subunit.

In terms of biological role, one of two assembly initiator proteins, it binds directly to the 5'-end of the 23S rRNA, where it nucleates assembly of the 50S subunit. One of the proteins that surrounds the polypeptide exit tunnel on the outside of the subunit. The protein is Large ribosomal subunit protein uL24 of Bartonella quintana (strain Toulouse) (Rochalimaea quintana).